The following is a 298-amino-acid chain: 4-hydroxybenzoate octaprenyltransferase (298 aa).

The next 7 membrane-spanning stretches (helical) occupy residues 30 to 50, 54 to 74, 105 to 125, 148 to 168, 218 to 238, 240 to 260, and 275 to 295; these read IGTW…AEGI, GTLL…CVVN, VLFA…NLPT, FPQV…FMAI, DRLM…WVGL, LALG…FVFQ, and AFLN…LSLW.

Belongs to the UbiA prenyltransferase family. It depends on Mg(2+) as a cofactor.

The protein resides in the cell inner membrane. It carries out the reaction all-trans-octaprenyl diphosphate + 4-hydroxybenzoate = 4-hydroxy-3-(all-trans-octaprenyl)benzoate + diphosphate. Its pathway is cofactor biosynthesis; ubiquinone biosynthesis. In terms of biological role, catalyzes the prenylation of para-hydroxybenzoate (PHB) with an all-trans polyprenyl group. Mediates the second step in the final reaction sequence of ubiquinone-8 (UQ-8) biosynthesis, which is the condensation of the polyisoprenoid side chain with PHB, generating the first membrane-bound Q intermediate 3-octaprenyl-4-hydroxybenzoate. The polypeptide is 4-hydroxybenzoate octaprenyltransferase (Chromohalobacter salexigens (strain ATCC BAA-138 / DSM 3043 / CIP 106854 / NCIMB 13768 / 1H11)).